Consider the following 285-residue polypeptide: uncharacterized protein (285 aa).

The region spanning 92–199 (TLLLADVEES…PTINRTARLR (108 aa)) is the Guanylate cyclase domain.

It belongs to the adenylyl cyclase class-4/guanylyl cyclase family.

This is an uncharacterized protein from Mycobacterium tuberculosis (strain CDC 1551 / Oshkosh).